The following is a 3166-amino-acid chain: Intermembrane lipid transfer protein VPS13A (3166 aa).

Residues Phe-3–Lys-116 enclose the Chorein N-terminal domain. 2 TPR repeats span residues Leu-212 to Val-245 and Leu-373 to Glu-406. Thr-831 carries the post-translational modification Phosphothreonine. Residue Ser-835 is modified to Phosphoserine. Residues Glu-838–Cys-844 carry the FFAT motif. Residues Ala-1343 to Thr-1359 show a composition bias toward polar residues. Residues Ala-1343–Ser-1365 are disordered. Residue Ser-1410 is modified to Phosphoserine. TPR repeat units lie at residues Ala-1806–Lys-1840 and Ile-1999–Asp-2034. The region spanning Val-2202 to Gly-2447 is the SHR-BD domain. 2 required for mitochondrial localization regions span residues Leu-2607–Leu-3166 and Glu-2743–Leu-3166. 2 TPR repeats span residues Ala-2716–Val-2750 and Ile-2852–Phe-2890. The interval Pro-2945–Ala-3019 is required for lipid droplet localization.

It belongs to the VPS13 family. Interacts (via FFAT motif) with VAPA and VAPB. Interacts with RAB7A. Interacts with XK.

The protein resides in the mitochondrion outer membrane. It is found in the endoplasmic reticulum membrane. It localises to the endosome membrane. Its subcellular location is the lysosome membrane. The protein localises to the lipid droplet. The protein resides in the golgi apparatus. It is found in the cytoplasmic vesicle. It localises to the secretory vesicle. Its subcellular location is the neuronal dense core vesicle. Its function is as follows. Mediates the transfer of lipids between membranes at organelle contact sites. Required for the formation or stabilization of ER-mitochondria contact sites which enable transfer of lipids between the ER and mitochondria. Negatively regulates lipid droplet size and motility. Required for efficient lysosomal protein degradation. This is Intermembrane lipid transfer protein VPS13A from Mus musculus (Mouse).